We begin with the raw amino-acid sequence, 697 residues long: MPRQLFVTTALPYANGHFHIGHIMEYIQADIWVRFQRMQGHAVHFVGADDAHGAPIMIAAEKAGKTPQQFVADIAAGRKPYLDGFHIAFDNWHSTDGPENHQLAQDTYRALRRNGLIFTREIEQFFDPVKAMFLPDRYIKGECPKCGAKDQYGDSCEVCGAVYAPTELKNPYSTLTGATPVMKTSEHHFFQLSSPRCLDFLKDWTHGSAPISGQPRLQAEVLNKIKEWFATDEQGHGGLADWDISRDAPYFGIEIPDAPGKYFYVWLDAPIGYLASLKNYFDKQGLDFEAFMADPKTEQVHFIGKDITYFHTLFWPAMLHFSGRRTPDHVFVHGFITVSGEKMSKSRGTGISPLRYLEIGMNAEWLRYYIAAKLNGRVEDVDFNPDDFVARVNSDLVGKYINIASRAAGFLSKRFDGRLTAELPAESRTLLEGLQAARDDIARLYEDREYAKALREAMALADRVNEYVDANKPWELAKQAGQDARLQQVCSTCIEAFRLLTIYLKPVLPALAAQVEGFLKVEPMRFADAGRLLGAHAISEYKHLMQRVDPKLLDALFEPPAEPSPQTSPAAAGAGAVPGGEALAPTITIDDFTKIDLRLAQIVDAALVEGSTKLLRLSLDVGEGRHRTVFSGIQSAFKPADVIGKFTVVVANLAPRKMKFGLSEGMVLAASHADEKTHPGLYLLEPTPGAVPGLRVR.

Positions 12 to 22 (PYANGHFHIGH) match the 'HIGH' region motif. The Zn(2+) site is built by Cys-143, Cys-146, Cys-156, and Cys-159. Residues 342 to 346 (KMSKS) carry the 'KMSKS' region motif. An ATP-binding site is contributed by Lys-345. Residues 557-577 (FEPPAEPSPQTSPAAAGAGAV) form a disordered region. A tRNA-binding domain is found at 591–697 (DFTKIDLRLA…PGAVPGLRVR (107 aa)).

Belongs to the class-I aminoacyl-tRNA synthetase family. MetG type 1 subfamily. Homodimer. Zn(2+) is required as a cofactor.

It localises to the cytoplasm. It catalyses the reaction tRNA(Met) + L-methionine + ATP = L-methionyl-tRNA(Met) + AMP + diphosphate. Functionally, is required not only for elongation of protein synthesis but also for the initiation of all mRNA translation through initiator tRNA(fMet) aminoacylation. This Methylibium petroleiphilum (strain ATCC BAA-1232 / LMG 22953 / PM1) protein is Methionine--tRNA ligase.